Reading from the N-terminus, the 485-residue chain is N-succinylglutamate 5-semialdehyde dehydrogenase (485 aa).

220–225 (GSANTG) is a binding site for NAD(+). Active-site residues include E243 and C278.

The protein belongs to the aldehyde dehydrogenase family. AstD subfamily.

It carries out the reaction N-succinyl-L-glutamate 5-semialdehyde + NAD(+) + H2O = N-succinyl-L-glutamate + NADH + 2 H(+). It participates in amino-acid degradation; L-arginine degradation via AST pathway; L-glutamate and succinate from L-arginine: step 4/5. Catalyzes the NAD-dependent reduction of succinylglutamate semialdehyde into succinylglutamate. This chain is N-succinylglutamate 5-semialdehyde dehydrogenase, found in Vibrio campbellii (strain ATCC BAA-1116).